Consider the following 188-residue polypeptide: Mediator of RNA polymerase II transcription subunit 29 (188 aa).

Low complexity-rich tracts occupy residues 1 to 23 (MNPN…QSSP) and 30 to 43 (VQHQ…PLQQ). Residues 1 to 43 (MNPNMNMMPMSGPQMMQVMQSSPSGPPGPVQHQQQQPPQPLQQ) form a disordered region.

The protein belongs to the Mediator complex subunit 29 family. In terms of assembly, component of the Mediator complex. Self-associates. Interacts with dsx.

The protein resides in the nucleus. Functionally, component of the Mediator complex, a coactivator involved in the regulated transcription of nearly all RNA polymerase II-dependent genes. Mediator functions as a bridge to convey information from gene-specific regulatory proteins to the basal RNA polymerase II transcription machinery. Mediator is recruited to promoters by direct interactions with regulatory proteins and serves as a scaffold for the assembly of a functional preinitiation complex with RNA polymerase II and the general transcription factors. Required for female somatic sexual development. The chain is Mediator of RNA polymerase II transcription subunit 29 (ix) from Drosophila melanogaster (Fruit fly).